The primary structure comprises 287 residues: Undecaprenyl-diphosphatase (287 aa).

The next 7 membrane-spanning stretches (helical) occupy residues 6–26 (LYLIKAFFLGIIEGLTEFIPV), 45–65 (SGKVFEVVIQFGSILAVMWIF), 85–105 (AFTRNLLLAFLPAAVVGAIFI), 111–131 (VFYHPGVVAVTLVLGGLIMLW), 204–224 (ATEFSFFLAMPTMLGAATYDL), 238–258 (AIAVGFAAAFISALVVVRAVL), and 265–285 (TYRGFAWYRIALGIVVAAWLM).

It belongs to the UppP family.

The protein resides in the cell inner membrane. The enzyme catalyses di-trans,octa-cis-undecaprenyl diphosphate + H2O = di-trans,octa-cis-undecaprenyl phosphate + phosphate + H(+). Its function is as follows. Catalyzes the dephosphorylation of undecaprenyl diphosphate (UPP). Confers resistance to bacitracin. The protein is Undecaprenyl-diphosphatase of Bordetella petrii (strain ATCC BAA-461 / DSM 12804 / CCUG 43448).